A 356-amino-acid polypeptide reads, in one-letter code: S-adenosylmethionine:tRNA ribosyltransferase-isomerase (356 aa).

Belongs to the QueA family. Monomer.

The protein localises to the cytoplasm. The enzyme catalyses 7-aminomethyl-7-carbaguanosine(34) in tRNA + S-adenosyl-L-methionine = epoxyqueuosine(34) in tRNA + adenine + L-methionine + 2 H(+). It participates in tRNA modification; tRNA-queuosine biosynthesis. Its function is as follows. Transfers and isomerizes the ribose moiety from AdoMet to the 7-aminomethyl group of 7-deazaguanine (preQ1-tRNA) to give epoxyqueuosine (oQ-tRNA). In Yersinia pestis, this protein is S-adenosylmethionine:tRNA ribosyltransferase-isomerase.